The following is a 205-amino-acid chain: Molybdenum cofactor guanylyltransferase (205 aa).

GTP-binding positions include 14 to 16, Lys-27, Asp-77, and Asp-107; that span reads LAG. Asp-107 provides a ligand contact to Mg(2+).

The protein belongs to the MobA family. As to quaternary structure, monomer. Mg(2+) serves as cofactor.

The protein localises to the cytoplasm. It carries out the reaction Mo-molybdopterin + GTP + H(+) = Mo-molybdopterin guanine dinucleotide + diphosphate. Transfers a GMP moiety from GTP to Mo-molybdopterin (Mo-MPT) cofactor (Moco or molybdenum cofactor) to form Mo-molybdopterin guanine dinucleotide (Mo-MGD) cofactor. This Burkholderia ambifaria (strain MC40-6) protein is Molybdenum cofactor guanylyltransferase.